We begin with the raw amino-acid sequence, 98 residues long: Integration host factor subunit alpha (98 aa).

The tract at residues 51 to 71 is disordered; that stretch reads NFDLRDKNERPGRNPKTGEDI. A compositionally biased stretch (basic and acidic residues) spans 53–69; that stretch reads DLRDKNERPGRNPKTGE.

The protein belongs to the bacterial histone-like protein family. Heterodimer of an alpha and a beta chain.

In terms of biological role, this protein is one of the two subunits of integration host factor, a specific DNA-binding protein that functions in genetic recombination as well as in transcriptional and translational control. In Vibrio campbellii (strain ATCC BAA-1116), this protein is Integration host factor subunit alpha.